The chain runs to 392 residues: ATP phosphoribosyltransferase regulatory subunit (392 aa).

Belongs to the class-II aminoacyl-tRNA synthetase family. HisZ subfamily. Heteromultimer composed of HisG and HisZ subunits.

The protein resides in the cytoplasm. It functions in the pathway amino-acid biosynthesis; L-histidine biosynthesis; L-histidine from 5-phospho-alpha-D-ribose 1-diphosphate: step 1/9. Functionally, required for the first step of histidine biosynthesis. May allow the feedback regulation of ATP phosphoribosyltransferase activity by histidine. The sequence is that of ATP phosphoribosyltransferase regulatory subunit from Geobacillus sp. (strain WCH70).